A 2266-amino-acid polypeptide reads, in one-letter code: Little elongation complex subunit 1 (2266 aa).

Residues 23–186 (CASLQQNLNE…KQKNEKELRH (164 aa)) adopt a coiled-coil conformation. Disordered regions lie at residues 223 to 259 (GEGS…PLRT) and 517 to 540 (PAQE…KRPL). Polar residues predominate over residues 250–259 (PPTQGSPLRT). Phosphoserine is present on residues Ser-255, Ser-533, Ser-558, and Ser-589. The interval 591-623 (ELEKEKEDTQGFTLGESPESEDDDSGDGMDVAG) is disordered. Acidic residues predominate over residues 608 to 617 (PESEDDDSGD). Ser-707 bears the Phosphoserine mark. Thr-832 is modified (phosphothreonine). Phosphoserine is present on Ser-925. The tract at residues 925–955 (SPEVSASRRKLDFNSPGGSSPVENSDCSTNS) is disordered. Residues 940–955 (PGGSSPVENSDCSTNS) are compositionally biased toward polar residues. Ser-958 carries the phosphoserine modification. Disordered regions lie at residues 977-1001 (VQGD…HGSE) and 1107-1133 (TEVE…QKNL). A compositionally biased stretch (polar residues) spans 984–998 (QRQPQATDLDSSGTH). Lys-1218 carries the post-translational modification N6-acetyllysine. Disordered stretches follow at residues 1295-1372 (TTEN…PSAL), 1467-1510 (AEKS…KSRL), and 1543-1707 (NSKL…SASE). Polar residues-rich tracts occupy residues 1306 to 1319 (RETT…SEPT), 1328 to 1344 (EGSS…NPQS), 1487 to 1505 (NNLS…STNF), 1565 to 1588 (NKPV…QSFS), and 1594 to 1605 (TKTQRSQTQTIL). Position 1588 is a phosphoserine (Ser-1588). Low complexity-rich tracts occupy residues 1609–1620 (DTSTPTDCSPDT) and 1637–1671 (APLI…QVSP). Ser-1617 bears the Phosphoserine mark. Thr-1642 carries the post-translational modification Phosphothreonine. Residues Ser-1692, Ser-1697, Ser-1699, Ser-1701, Ser-1712, Ser-1838, and Ser-1854 each carry the phosphoserine modification. The segment at 1809–1902 (TGSSSGGDCN…AVSAVSQLPL (94 aa)) is disordered. The segment covering 1825–1843 (LGTQQDSSGKRTLSTSTLR) has biased composition (polar residues). Polar residues predominate over residues 1889-1901 (CSSPAVSAVSQLP). Position 1903 is a phosphoserine (Ser-1903).

This sequence belongs to the ICE1 family. Component of the little elongation complex (LEC), at least composed of ELL (ELL, ELL2 or ELL3), ZC3H8, ICE1 and ICE2. Interacts (via N-terminus domain) with ELL. Interacts (via C-terminus domain) with ICE2 and ZC3H8.

Its subcellular location is the nucleus. It is found in the cajal body. Functionally, component of the little elongation complex (LEC), a complex required to regulate small nuclear RNA (snRNA) gene transcription by RNA polymerase II and III. Specifically acts as a scaffold protein that promotes the LEC complex formation and recruitment and RNA polymerase II occupancy at snRNA genes in subnuclear bodies. This Homo sapiens (Human) protein is Little elongation complex subunit 1 (ICE1).